A 155-amino-acid chain; its full sequence is uncharacterized protein (155 aa).

Residues 135–155 (SQANSKNDSNSKDDLPNPFSV) form a disordered region.

This is an uncharacterized protein from Acidianus convivator (ATV).